Reading from the N-terminus, the 252-residue chain is Small ribosomal subunit protein eS4 (252 aa).

An S4 RNA-binding domain is found at 43-105 (FPLLIIVRDI…TGETYRVIPV (63 aa)).

Belongs to the eukaryotic ribosomal protein eS4 family.

This Staphylothermus marinus (strain ATCC 43588 / DSM 3639 / JCM 9404 / F1) protein is Small ribosomal subunit protein eS4.